Here is a 116-residue protein sequence, read N- to C-terminus: Photosystem II reaction center Psb28 protein (116 aa).

The protein belongs to the Psb28 family. In terms of assembly, part of the photosystem II complex.

The protein resides in the plastid. The protein localises to the chloroplast thylakoid membrane. The chain is Photosystem II reaction center Psb28 protein from Guillardia theta (Cryptophyte).